Here is a 60-residue protein sequence, read N- to C-terminus: Potassium channel toxin-like Tx677 (60 aa).

The N-terminal stretch at 1–22 (MKISALVMITLLICSMMILCQG) is a signal peptide. Cystine bridges form between C30-C51, C36-C56, and C40-C58.

The protein belongs to the short scorpion toxin superfamily. Potassium channel inhibitor family. In terms of tissue distribution, expressed by the venom gland.

Its subcellular location is the secreted. Weakly inhibits Kv11.1/KCNH2/ERG1, Kv1.2/KCNA2 and Kv1.3/KCNA3 voltage-gated potassium channels. The protein is Potassium channel toxin-like Tx677 of Buthus israelis (Israeli scorpion).